Here is a 229-residue protein sequence, read N- to C-terminus: Large ribosomal subunit protein uL1 (229 aa).

Belongs to the universal ribosomal protein uL1 family. As to quaternary structure, part of the 50S ribosomal subunit.

In terms of biological role, binds directly to 23S rRNA. The L1 stalk is quite mobile in the ribosome, and is involved in E site tRNA release. Its function is as follows. Protein L1 is also a translational repressor protein, it controls the translation of the L11 operon by binding to its mRNA. The protein is Large ribosomal subunit protein uL1 of Caulobacter sp. (strain K31).